The sequence spans 171 residues: Adenine phosphoribosyltransferase (171 aa).

It belongs to the purine/pyrimidine phosphoribosyltransferase family. In terms of assembly, homodimer.

It is found in the cytoplasm. It carries out the reaction AMP + diphosphate = 5-phospho-alpha-D-ribose 1-diphosphate + adenine. It participates in purine metabolism; AMP biosynthesis via salvage pathway; AMP from adenine: step 1/1. Its function is as follows. Catalyzes a salvage reaction resulting in the formation of AMP, that is energically less costly than de novo synthesis. In Solidesulfovibrio magneticus (strain ATCC 700980 / DSM 13731 / RS-1) (Desulfovibrio magneticus), this protein is Adenine phosphoribosyltransferase.